We begin with the raw amino-acid sequence, 198 residues long: Glycerol-3-phosphate acyltransferase 2 (198 aa).

4 helical membrane passes run 4-24 (TYLLFIVAYLLGSIPFALVVG), 71-91 (LPIIFALDIHPLWFGLAAVLG), 113-133 (LLCYSPVVFAILAVVFFSLLF), and 147-167 (VVAVIASIVSGDKIFIIAMCL).

The protein belongs to the PlsY family. In terms of assembly, probably interacts with PlsX.

It is found in the cell membrane. The catalysed reaction is an acyl phosphate + sn-glycerol 3-phosphate = a 1-acyl-sn-glycero-3-phosphate + phosphate. The protein operates within lipid metabolism; phospholipid metabolism. In terms of biological role, catalyzes the transfer of an acyl group from acyl-phosphate (acyl-PO(4)) to glycerol-3-phosphate (G3P) to form lysophosphatidic acid (LPA). This enzyme utilizes acyl-phosphate as fatty acyl donor, but not acyl-CoA or acyl-ACP. The chain is Glycerol-3-phosphate acyltransferase 2 from Bacillus cereus (strain ATCC 10987 / NRS 248).